Consider the following 374-residue polypeptide: 5-aminosalicylate 1,2-dioxygenase (374 aa).

This sequence belongs to the gentisate 1,2-dioxygenase family. Fe(2+) is required as a cofactor.

The enzyme catalyses 5-amino-2-hydroxybenzoate + O2 = (2Z,4E)-4-amino-6-oxohepta-2,4-dienedioate + H(+). With respect to regulation, inhibited by SDS and o-phenanthroline, a ferrous iron chelator. Partially inhibited by EDTA. Functionally, involved in the biodegradation of 3-aminobenzoate. Catalyzes the cleavage of the 5-aminosalicylate (5ASA) aromatic ring to form 4-amino-6-oxohepta-2,4-dienedioate (cis-ACOHDA). Can also convert gentisate, but the catalytic efficiency with 5ASA is 70-fold higher. The chain is 5-aminosalicylate 1,2-dioxygenase from Comamonas sp.